The sequence spans 114 residues: C-X-C motif chemokine 6 (114 aa).

The N-terminal stretch at 1–37 is a signal peptide; that stretch reads MSLPSSRAARVPGPSGSLCALLALLLLLTPPGPLASA. Disulfide bonds link Cys-49-Cys-75 and Cys-51-Cys-91.

It belongs to the intercrine alpha (chemokine CxC) family.

It localises to the secreted. Chemotactic for neutrophil granulocytes. Signals through binding and activation of its receptors (CXCR1 and CXCR2). In addition to its chemotactic and angiogenic properties, it has strong antibacterial activity against Gram-positive and Gram-negative bacteria (90-fold-higher when compared to CXCL5 and CXCL7). This is C-X-C motif chemokine 6 (CXCL6) from Homo sapiens (Human).